Reading from the N-terminus, the 410-residue chain is Secreted protein PRY1 (410 aa).

The N-terminal stretch at 1–20 (MKQNYILSIILCYLLANVHS) is a signal peptide. Disordered regions lie at residues 64–86 (PAPV…STPS), 102–132 (SDSD…SSSS), and 148–260 (SSSS…SSSS). The span at 148 to 179 (SSSSTPSSISQQQQQQQGSPASGSNSPNSAQP) shows a compositional bias: low complexity. Residues 197 to 211 (SGLGSGFGSGFGSGS) are compositionally biased toward gly residues. Residues 212–260 (GSDSDSGSGLPSASSSTIIQQQPSSSNIGSSSTSSSSSSSSSSSSSSSS) are compositionally biased toward low complexity. Residues 283–394 (LDAHNKYRAQ…NWGLYVVCEY (112 aa)) form the SCP domain.

It belongs to the CRISP family.

Its subcellular location is the secreted. In terms of biological role, secreted protein that acts as a virulence factor during infections. The chain is Secreted protein PRY1 (PRY1) from Candida albicans (strain SC5314 / ATCC MYA-2876) (Yeast).